We begin with the raw amino-acid sequence, 539 residues long: GMP synthase [glutamine-hydrolyzing] (539 aa).

The 200-residue stretch at 4–203 (KILILDFGSQ…VHDICGCKSD (200 aa)) folds into the Glutamine amidotransferase type-1 domain. The active-site Nucleophile is Cys-82. Catalysis depends on residues His-177 and Glu-179. The 192-residue stretch at 204–395 (WNMPDYIAEA…LGLPHDMVYR (192 aa)) folds into the GMPS ATP-PPase domain. 231–237 (SGGVDSS) contributes to the ATP binding site.

Homodimer.

It catalyses the reaction XMP + L-glutamine + ATP + H2O = GMP + L-glutamate + AMP + diphosphate + 2 H(+). The protein operates within purine metabolism; GMP biosynthesis; GMP from XMP (L-Gln route): step 1/1. Catalyzes the synthesis of GMP from XMP. This is GMP synthase [glutamine-hydrolyzing] from Herminiimonas arsenicoxydans.